A 194-amino-acid chain; its full sequence is Fe/S biogenesis protein NfuA (194 aa).

[4Fe-4S] cluster contacts are provided by Cys-152 and Cys-155.

This sequence belongs to the NfuA family. As to quaternary structure, homodimer. Requires [4Fe-4S] cluster as cofactor.

Functionally, involved in iron-sulfur cluster biogenesis. Binds a 4Fe-4S cluster, can transfer this cluster to apoproteins, and thereby intervenes in the maturation of Fe/S proteins. Could also act as a scaffold/chaperone for damaged Fe/S proteins. The sequence is that of Fe/S biogenesis protein NfuA from Pseudomonas aeruginosa (strain LESB58).